The chain runs to 463 residues: T-box transcription factor TBX1 (463 aa).

2 disordered regions span residues 39 to 58 and 75 to 103; these read SPSP…PCSA and GASS…PVKK. Residues 75–97 show a composition bias toward low complexity; it reads GASSSSCASSTPGSGSTGSSGSS. The segment at residues 119–297 is a DNA-binding region (T-box); it reads LWDEFNQLGT…SNPFAKGFRD (179 aa). 2 disordered regions span residues 320–354 and 367–405; these read RSRN…PLHG and SPSL…LHHH. Residues 323–332 are compositionally biased toward polar residues; the sequence is NPVSSPPQNG. Residues 333-347 are compositionally biased toward basic and acidic residues; it reads SDKDGDGRREYERDT. The segment covering 367-380 has biased composition (low complexity); that stretch reads SPSLPVPGGLVPLS. Positions 420–431 match the Nuclear localization signal motif; it reads KTRPAPYPLPSI.

In terms of assembly, binds DNA as a dimer. Interacts with dscr6/ripply3.

It localises to the nucleus. Its function is as follows. Probable transcriptional regulator involved in developmental processes. Binds to the palindromic T site 5'-TTCACACCTAGGTGTGAA-3' DNA sequence. Induces pre-placodal ectoderm (PPE) gene expression in regions where RIPPLY3 is absent. Plays a role in the formation of the anteroposterior (AP) axis during embryonic development; required to establish the posterolateral border of the pre-placodal ectoderm (PPE) acting downstream of the retinoic acid receptor (RAR) signaling. This Xenopus tropicalis (Western clawed frog) protein is T-box transcription factor TBX1 (tbx1).